The sequence spans 794 residues: Cadherin-12 (794 aa).

Residues 1–23 form the signal peptide; the sequence is MLTRNCLSLLLWVLFDGGLLTPL. A propeptide spanning residues 24 to 54 is cleaved from the precursor; it reads QPQPQQTLATEPRENVIHLPGQRSHFQRVKR. Cadherin domains are found at residues 55–160, 161–269, 270–384, 385–487, and 488–609; these read GWVW…EPKF, LDGP…PPRF, PKSI…PPVF, SKPL…EFPP, and EISV…IFLP. The Extracellular segment spans residues 55–609; sequence GWVWNQFFVL…SCNVEAIFLP (555 aa). Asparagine 256 is a glycosylation site (N-linked (GlcNAc...) asparagine). N-linked (GlcNAc...) asparagine glycosylation is found at asparagine 456, asparagine 537, and asparagine 545. Residues 610–637 form a helical membrane-spanning segment; the sequence is VGLSTGALIAILLCIVILLAIVVLYVAL. The Cytoplasmic portion of the chain corresponds to 638-794; sequence RRQKKKDTLM…EESYNPDKVT (157 aa). Serine 787 is modified (phosphoserine).

In terms of tissue distribution, brain.

It localises to the cell membrane. Functionally, cadherins are calcium-dependent cell adhesion proteins. They preferentially interact with themselves in a homophilic manner in connecting cells; cadherins may thus contribute to the sorting of heterogeneous cell types. The chain is Cadherin-12 (CDH12) from Homo sapiens (Human).